Reading from the N-terminus, the 533-residue chain is Zinc finger protein 26 (533 aa).

Positions 14–85 constitute a KRAB domain; that stretch reads LSFKDISMEF…NAKISRQSCP (72 aa). C2H2-type zinc fingers lie at residues 174–196, 202–224, 230–252, 258–280, 286–308, 314–336, 342–364, 370–392, 398–420, 426–448, 454–476, 482–504, and 510–532; these read CVCSECGKAFRCKSQLIVHLRIH, YECSKCERAFSAKSNLNAHQRVH, YSCSECEKVFSFRSQLIVHQEIH, YGCSECGKAYSWKSQLLLHQRSH, YECSECGKAFSLKSPFVVHQRTH, HKCSECGKAFRSKSYLLVHIRMH, YQCSDCGKAFNMKTQLIVHQGVH, YQCGECGKAFGRKEQLTAHLRAH, YGCSECGKAFSSKSYLVIHRRTH, YECSLCERAFCGKSQLIIHQRTH, YECNECEKAYPRKASLQIHQKTH, FKCSECGKAFTQKSSLSEHQRVH, and WKCSECGKSFCWNSGLRIHRKTH.

Belongs to the krueppel C2H2-type zinc-finger protein family.

Its subcellular location is the nucleus. Its function is as follows. May be involved in transcriptional regulation. In Homo sapiens (Human), this protein is Zinc finger protein 26 (ZNF26).